Reading from the N-terminus, the 243-residue chain is Aquaporin SIP1-2 (243 aa).

Helical transmembrane passes span 9–29 (AAAA…TLGA) and 45–65 (FALL…NILC). The NPA 1 motif lies at 74–76 (NPT). The next 3 helical transmembrane spans lie at 98-118 (LPAQ…LMPA), 136-156 (GAGA…LIIV), and 163-183 (IIKT…GAAY). Positions 189-191 (NPA) match the NPA 2 motif. The chain crosses the membrane as a helical span at residues 211 to 231 (VYWICPFIGAILAAWIFRAMF).

The protein belongs to the MIP/aquaporin (TC 1.A.8) family. SIP (TC 1.A.8.10) subfamily.

The protein localises to the membrane. Aquaporins facilitate the transport of water and small neutral solutes across cell membranes. The chain is Aquaporin SIP1-2 (SIP1-2) from Zea mays (Maize).